We begin with the raw amino-acid sequence, 184 residues long: Ribosome-recycling factor (184 aa).

Residues 141-165 are disordered; the sequence is DEKNGDITEDDLRSQTDDVQKATDN.

It belongs to the RRF family.

The protein localises to the cytoplasm. Its function is as follows. Responsible for the release of ribosomes from messenger RNA at the termination of protein biosynthesis. May increase the efficiency of translation by recycling ribosomes from one round of translation to another. This chain is Ribosome-recycling factor, found in Staphylococcus epidermidis (strain ATCC 35984 / DSM 28319 / BCRC 17069 / CCUG 31568 / BM 3577 / RP62A).